A 279-amino-acid polypeptide reads, in one-letter code: Proteasome subunit beta 2 (279 aa).

Positions 1-53 (MAAAFDPSGRFPDLFTSVGTSSFSAFLSKAAPELLPGRRPLPPGMATGLTPHA) are cleaved as a propeptide — removed in mature form; by autocatalysis. T54 functions as the Nucleophile in the catalytic mechanism.

This sequence belongs to the peptidase T1B family. In terms of assembly, the 20S proteasome core is composed of 14 alpha and 14 beta subunits that assemble into four stacked heptameric rings, resulting in a barrel-shaped structure. The two inner rings, each composed of seven catalytic beta subunits, are sandwiched by two outer rings, each composed of seven alpha subunits. The catalytic chamber with the active sites is on the inside of the barrel. Has a gated structure, the ends of the cylinder being occluded by the N-termini of the alpha-subunits. Is capped by the proteasome-associated ATPase, ARC.

The protein localises to the cytoplasm. It catalyses the reaction Cleavage of peptide bonds with very broad specificity.. The protein operates within protein degradation; proteasomal Pup-dependent pathway. The formation of the proteasomal ATPase ARC-20S proteasome complex, likely via the docking of the C-termini of ARC into the intersubunit pockets in the alpha-rings, may trigger opening of the gate for substrate entry. Interconversion between the open-gate and close-gate conformations leads to a dynamic regulation of the 20S proteasome proteolysis activity. Functionally, component of the proteasome core, a large protease complex with broad specificity involved in protein degradation. This Salinispora tropica (strain ATCC BAA-916 / DSM 44818 / JCM 13857 / NBRC 105044 / CNB-440) protein is Proteasome subunit beta 2.